The sequence spans 594 residues: MKKVMMLALALGASTSLAAPFVYPANWTSNKPGDVQTGGTFRSVNLQDFKTLNPFVSSESPNLPAVLSAGSLLGYNPVTGNYAPYMAEKYTQSADKRTFTFDIRKGMKWSDGKPITVDDWITAYTIDSNKDVGSNTFDYWTINNQPIKVTKVDSNTLKVVFPKADVTAIEFLSGIFLPQPTHVFMPVWKAKGAQGIKDMWTISTNPDNIVTSGPFMLDRYVRGERAILKKNPYFGEWNKDSAGKSLPYLDGIQINIVADANAQLAQFLAGNLDTYSPDNRDKLAQVKSAMDGGKVKGTLIPNASARASSDFMVFNMDDSATFKTKLFSNVKFRQAMSMLMNRDAMVDLALGGLGEPTYTSVYPVYKDWIPSGMDKYKFNPTAAAKLLAELGFTKKGSDGILVDKAGNKLEFTLITNAENNRRQSYAKVIQDEAKKVGVKINVSAIAFNQMTTLLDAKDNFGRRNFDAIIIGLTGGGQVYPVSGPSVVECKGLGDGGNLHMFNQSNKCRFPFETQAVNLFWKGRAEFDLAKRKAIAAQIQRNEMENQPYIQLAAQTVHFAWTDRVQGEYNRPQINSLNASTLFGPRDIALTWIKR.

A signal peptide spans 1 to 18 (MKKVMMLALALGASTSLA).

This sequence belongs to the bacterial solute-binding protein 5 family.

In terms of biological role, probably part of a binding-protein-dependent transport system. This is Probable ABC transporter-binding protein DR_1571 from Deinococcus radiodurans (strain ATCC 13939 / DSM 20539 / JCM 16871 / CCUG 27074 / LMG 4051 / NBRC 15346 / NCIMB 9279 / VKM B-1422 / R1).